We begin with the raw amino-acid sequence, 69 residues long: Cecropin-like peptide 1 (69 aa).

The signal sequence occupies residues 1 to 23 (MNFTKLFVVFAVVLVAFAGQSEA). Gln68 is modified (glutamine amide).

As to expression, following bacterial infection, expressed in fat body, trachea and muscle.

The protein resides in the secreted. Antimicrobial peptide active against Gram-negative bacteria E.coli KCCM 11234 (MIC&lt;=1.03 uM), E.aerogenes KCCM 12177 (MIC&lt;=2.07 uM) and P.aeruginosa KCCM 11328 (MIC&lt;=2.07 uM). Not active against various Gram-positive bacteria at concentrations up to 4.14 uM. This chain is Cecropin-like peptide 1, found in Hermetia illucens (Black soldier fly).